We begin with the raw amino-acid sequence, 372 residues long: Putative glutamate--cysteine ligase 2 (372 aa).

It belongs to the glutamate--cysteine ligase type 2 family. YbdK subfamily. Homodimer.

The enzyme catalyses L-cysteine + L-glutamate + ATP = gamma-L-glutamyl-L-cysteine + ADP + phosphate + H(+). In terms of biological role, ATP-dependent carboxylate-amine ligase which exhibits weak glutamate--cysteine ligase activity. The protein is Putative glutamate--cysteine ligase 2 (ybdK) of Escherichia coli O157:H7.